A 216-amino-acid polypeptide reads, in one-letter code: Probable nicotinate-nucleotide adenylyltransferase (216 aa).

Belongs to the NadD family.

It carries out the reaction nicotinate beta-D-ribonucleotide + ATP + H(+) = deamido-NAD(+) + diphosphate. The protein operates within cofactor biosynthesis; NAD(+) biosynthesis; deamido-NAD(+) from nicotinate D-ribonucleotide: step 1/1. In terms of biological role, catalyzes the reversible adenylation of nicotinate mononucleotide (NaMN) to nicotinic acid adenine dinucleotide (NaAD). This chain is Probable nicotinate-nucleotide adenylyltransferase, found in Geotalea uraniireducens (strain Rf4) (Geobacter uraniireducens).